We begin with the raw amino-acid sequence, 470 residues long: uncharacterized protein (470 aa).

The disordered stretch occupies residues 439-470 (SIKSSKSKKQLKSSKSKKPIKHTKTKNIYVET). The span at 443-463 (SKSKKQLKSSKSKKPIKHTKT) shows a compositional bias: basic residues.

This is an uncharacterized protein from Acanthamoeba polyphaga mimivirus (APMV).